The chain runs to 277 residues: Caspase-3 (277 aa).

Met-1 is modified (N-acetylmethionine). 2 propeptides span residues 1–9 and 10–28; these read MENTENSVD and SKSI…KSVD. Lys-11 carries the N6-acetyllysine modification. The residue at position 26 (Ser-26) is a Phosphoserine. Catalysis depends on residues His-121 and Cys-163. S-nitrosocysteine; in inhibited form is present on Cys-163.

The protein belongs to the peptidase C14A family. In terms of assembly, heterotetramer that consists of two anti-parallel arranged heterodimers, each one formed by a 17 kDa (p17) and a 12 kDa (p12) subunit. Interacts with BIRC6/bruce. Cleavage by granzyme B, caspase-6, caspase-8 and caspase-10 generates the two active subunits. Additional processing of the propeptides is likely due to the autocatalytic activity of the activated protease. Active heterodimers between the small subunit of caspase-7 protease and the large subunit of caspase-3 also occur and vice versa. In terms of processing, S-nitrosylated on its catalytic site cysteine in unstimulated cell lines and denitrosylated upon activation of the Fas apoptotic pathway, associated with an increase in intracellular caspase activity. Fas therefore activates caspase-3 not only by inducing the cleavage of the caspase zymogen to its active subunits, but also by stimulating the denitrosylation of its active site thiol. Post-translationally, ubiquitinated by BIRC6; this activity is inhibited by DIABLO/SMAC.

The protein resides in the cytoplasm. It carries out the reaction Strict requirement for an Asp residue at positions P1 and P4. It has a preferred cleavage sequence of Asp-Xaa-Xaa-Asp-|- with a hydrophobic amino-acid residue at P2 and a hydrophilic amino-acid residue at P3, although Val or Ala are also accepted at this position.. Its activity is regulated as follows. Inhibited by BIRC6; following inhibition of BIRC6-caspase binding by DIABLO/SMAC, BIRC6 is subjected to caspase cleavage, leading to an increase in active caspases. In terms of biological role, involved in the activation cascade of caspases responsible for apoptosis execution. At the onset of apoptosis, it proteolytically cleaves poly(ADP-ribose) polymerase PARP1 at a '216-Asp-|-Gly-217' bond. Cleaves and activates sterol regulatory element binding proteins (SREBPs) between the basic helix-loop-helix leucine zipper domain and the membrane attachment domain. Cleaves and activates caspase-6, -7 and -9 (CASP6, CASP7 and CASP9, respectively). Cleaves and inactivates interleukin-18 (IL18). Triggers cell adhesion in sympathetic neurons through RET cleavage. Cleaves IL-1 beta between an Asp and an Ala, releasing the mature cytokine which is involved in a variety of inflammatory processes. Cleaves and inhibits serine/threonine-protein kinase AKT1 in response to oxidative stress. Acts as an inhibitor of type I interferon production during virus-induced apoptosis by mediating cleavage of antiviral proteins CGAS, IRF3 and MAVS, thereby preventing cytokine overproduction. Also involved in pyroptosis by mediating cleavage and activation of gasdermin-E (GSDME). Cleaves XRCC4 and phospholipid scramblase proteins XKR4, XKR8 and XKR9, leading to promote phosphatidylserine exposure on apoptotic cell surface. Cleaves BIRC6 following inhibition of BIRC6-caspase binding by DIABLO/SMAC. This is Caspase-3 (CASP3) from Macaca fascicularis (Crab-eating macaque).